We begin with the raw amino-acid sequence, 530 residues long: Phosphoenolpyruvate carboxykinase (ATP) (530 aa).

Positions 58, 195, and 201 each coordinate substrate. ATP is bound by residues lysine 201, histidine 220, and 236-244 (GLSGTGKTT). Positions 201 and 220 each coordinate Mn(2+). Aspartate 257 serves as a coordination point for Mn(2+). Residues glutamate 285, arginine 321, 440-441 (RI), and threonine 446 contribute to the ATP site. Arginine 321 is a binding site for substrate.

The protein belongs to the phosphoenolpyruvate carboxykinase (ATP) family. The cofactor is Mn(2+).

It is found in the cytoplasm. The catalysed reaction is oxaloacetate + ATP = phosphoenolpyruvate + ADP + CO2. It participates in carbohydrate biosynthesis; gluconeogenesis. Functionally, involved in the gluconeogenesis. Catalyzes the conversion of oxaloacetate (OAA) to phosphoenolpyruvate (PEP) through direct phosphoryl transfer between the nucleoside triphosphate and OAA. The chain is Phosphoenolpyruvate carboxykinase (ATP) from Staphylococcus haemolyticus (strain JCSC1435).